A 768-amino-acid chain; its full sequence is Kelch domain-containing protein 7A (768 aa).

The chain crosses the membrane as a helical span at residues 12 to 29 (VVLSAAALLLVTVAYRLY). A disordered region spans residues 35-210 (PAQRWGGNAQ…PAPLQGSSDM (176 aa)). At Ser-77 the chain carries Phosphoserine. The span at 104-118 (TDRKSQRKGSGEERG) shows a compositional bias: basic and acidic residues. A glycan (N-linked (GlcNAc...) asparagine) is linked at Asn-248. Positions 304–352 (LTEVPSPRPPPRSLGTGAASGGQAGDTKGAAERAASPQPGPSPSTRGFS) are disordered. The stretch at 319-365 (TGAASGGQAGDTKGAAERAASPQPGPSPSTRGFSRKESLLQIAENPE) is one Kelch 1 repeat. Position 356 is a phosphoserine (Ser-356). A disordered region spans residues 371-395 (DGFWLPAPPCPDPGALPGSGRSSQE). 4 Kelch repeats span residues 483-529 (QYLV…ICSL), 532-580 (YLFV…ALDG), 581-623 (HLYA…ATAC), and 626-668 (EIFV…AVNG).

The protein localises to the membrane. The chain is Kelch domain-containing protein 7A (KLHDC7A) from Pongo abelii (Sumatran orangutan).